A 593-amino-acid polypeptide reads, in one-letter code: MGEALRGLKRTIMCGEPRENNIGEKVTVMGWVQRKRNLGGLIFVDLRDRTGIMQIVFGEEINKEAFEKSDNVKSEYCIAVTGEIVKRQSPNNDMETGAVELKGEDIKILSESETPPIYIKEGLDASENVRLKYRYLDLRRPDMQKIFMIRHKTCKVVRDFLDENGFLEMETPILTKSTPEGARDYLVPSRNYKGMFYALPQSPQIFKQLLMVSGYDKYFQITKCFRDEDLRANRQPEFTQIDMELSFVEEDDVIDLNEKLLAKVFKEVAGIDVKLPIERMPYKIAMEKYGSDKPDLRFGMEINDLTEAVKNSEFKVFKGAIEAGGSVRAIKAENCATMGRKQIDKLQDFVKTYKAKGLAWIAYKEDEIKSPIAKFLTEEEMKAILEKMDAKVGDLILIVGDKNNVVFESLGALRLHLAKELDIINKDEFRFVWITEFPLLAYNEEEGRYQAEHHPFTAIMDEDIDLLDTDPGKVRAKAYDIVLNGEELGGGSIRIHDSKLQEKMFSVLGFTKEKAWERFGFLLEAFKFGPPPHGGLAYGLDRMIMFLAGTENIKDVITFPKNQNAFCPLTEAPNVVDENQLEELGIKKIEKED.

Glu180 provides a ligand contact to L-aspartate. Residues 204–207 (QIFK) form an aspartate region. Residue Arg226 participates in L-aspartate binding. ATP is bound by residues 226–228 (RDE) and Gln235. His453 is an L-aspartate binding site. Glu487 is an ATP binding site. Arg494 is an L-aspartate binding site. 539-542 (GLDR) is an ATP binding site.

This sequence belongs to the class-II aminoacyl-tRNA synthetase family. Type 1 subfamily. Homodimer.

The protein localises to the cytoplasm. The enzyme catalyses tRNA(Asp) + L-aspartate + ATP = L-aspartyl-tRNA(Asp) + AMP + diphosphate. Functionally, catalyzes the attachment of L-aspartate to tRNA(Asp) in a two-step reaction: L-aspartate is first activated by ATP to form Asp-AMP and then transferred to the acceptor end of tRNA(Asp). The polypeptide is Aspartate--tRNA ligase (Clostridium botulinum (strain 657 / Type Ba4)).